A 1390-amino-acid polypeptide reads, in one-letter code: DNA-directed RNA polymerase III subunit RPC1 (1390 aa).

Residues Cys-69, Cys-72, Cys-79, His-82, Cys-109, and Cys-112 each contribute to the Zn(2+) site. Lys-144 lines the DNA pocket. Zn(2+)-binding residues include Cys-156 and Cys-159. 6 residues coordinate DNA: Lys-167, Ser-326, Lys-348, Arg-353, Arg-360, and Arg-366. Position 445 is an N6-acetyllysine (Lys-445). Arg-464 contributes to the RNA binding site. The Mg(2+) site is built by Asp-499, Asp-501, and Asp-503. RNA is bound at residue Asp-503. The bridging helix stretch occupies residues 844–856 (PTEFFFHTMAGRE). Residues Arg-1159, Arg-1305, and Lys-1323 each coordinate DNA.

The protein belongs to the RNA polymerase beta' chain family. As to quaternary structure, component of the RNA polymerase III (Pol III) complex consisting of 17 subunits: a ten-subunit catalytic core composed of POLR3A/RPC1, POLR3B/RPC2, POLR1C/RPAC1, POLR1D/RPAC2, POLR3K/RPC10, POLR2E/RPABC1, POLR2F/RPABC2, POLR2H/RPABC3, POLR2K/RPABC4 and POLR2L/RPABC5; a mobile stalk composed of two subunits POLR3H/RPC8 and CRCP/RPC9, protruding from the core and functioning primarily in transcription initiation; and additional subunits homologous to general transcription factors of the RNA polymerase II machinery, POLR3C/RPC3-POLR3F/RPC6-POLR3G/RPC7 heterotrimer required for transcription initiation and POLR3D/RPC4-POLR3E/RPC5 heterodimer involved in both transcription initiation and termination. As part of the RNA polymerase III complex, interacts with PKP2. The cofactor is Mg(2+).

The protein resides in the nucleus. Its subcellular location is the cytoplasm. It localises to the cytosol. It catalyses the reaction RNA(n) + a ribonucleoside 5'-triphosphate = RNA(n+1) + diphosphate. Catalytic core component of RNA polymerase III (Pol III), a DNA-dependent RNA polymerase which synthesizes small non-coding RNAs using the four ribonucleoside triphosphates as substrates. Synthesizes 5S rRNA, snRNAs, tRNAs and miRNAs from at least 500 distinct genomic loci. Pol III-mediated transcription cycle proceeds through transcription initiation, transcription elongation and transcription termination stages. During transcription initiation, Pol III is recruited to DNA promoters type I, II or III with the help of general transcription factors and other specific initiation factors. Once the polymerase has escaped from the promoter it enters the elongation phase during which RNA is actively polymerized, based on complementarity with the template DNA strand. Transcription termination involves the release of the RNA transcript and polymerase from the DNA. Forms Pol III active center together with the second largest subunit POLR3B/RPC2. Appends one nucleotide at a time to the 3' end of the nascent RNA, with POLR3A/RPC1 contributing a Mg(2+)-coordinating DxDGD motif, and POLR3B/RPC2 participating in the coordination of a second Mg(2+) ion and providing lysine residues believed to facilitate Watson-Crick base pairing between the incoming nucleotide and template base. Typically, Mg(2+) ions direct a 5' nucleoside triphosphate to form a phosphodiester bond with the 3' hydroxyl of the preceding nucleotide of the nascent RNA, with the elimination of pyrophosphate. Pol III plays a key role in sensing and limiting infection by intracellular bacteria and DNA viruses. Acts as a nuclear and cytosolic DNA sensor involved in innate immune response. Can sense non-self dsDNA that serves as template for transcription into dsRNA. The non-self RNA polymerase III transcripts, such as Epstein-Barr virus-encoded RNAs (EBERs) induce type I interferon and NF-kappa-B through the RIG-I pathway. The sequence is that of DNA-directed RNA polymerase III subunit RPC1 from Bos taurus (Bovine).